The primary structure comprises 193 residues: Interleukin-18-binding protein (193 aa).

The signal sequence occupies residues 1 to 28 (MTMRHCWTAGPSSWWVLLLYVHVILARA). Residues 60-161 (PALDVIWPEK…QVAQYHIILA (102 aa)) form the Ig-like C2-type domain. 4 N-linked (GlcNAc...) asparagine glycosylation sites follow: Asn-74, Asn-98, Asn-120, and Asn-142. Cys-81 and Cys-145 are joined by a disulfide. Polar residues predominate over residues 172 to 185 (SPSQETLSSHSPVS). The interval 172–193 (SPSQETLSSHSPVSRSAGPGVA) is disordered.

Its subcellular location is the secreted. Its function is as follows. Binds to IL-18 and inhibits its activity. Functions as an inhibitor of the early TH1 cytokine response. The sequence is that of Interleukin-18-binding protein (Il18bp) from Mus musculus (Mouse).